The following is a 519-amino-acid chain: Putative lipase ATG15 (519 aa).

The Cytoplasmic portion of the chain corresponds to 1 to 5; the sequence is MYIPG. A helical; Signal-anchor for type II membrane protein transmembrane segment spans residues 6-26; that stretch reads PLRLSSYLLPFLSSPSPPAQS. The Lumenal portion of the chain corresponds to 27 to 519; that stretch reads SPDTRTISFK…CYKWEFGEWN (493 aa). N48, N133, N196, N220, N302, and N309 each carry an N-linked (GlcNAc...) asparagine glycan. S318 (charge relay system) is an active-site residue. N-linked (GlcNAc...) asparagine glycosylation is present at N361. Residues 481–502 are disordered; the sequence is RRGPKRQPGGEDPKHGGVPKPV.

The protein belongs to the AB hydrolase superfamily. Lipase family. In terms of assembly, binds to both phosphatidylinositol (PI) and phosphatidylinositol 3,5-bisphosphate (PIP2).

It localises to the endosome. The protein localises to the multivesicular body membrane. Its subcellular location is the prevacuolar compartment membrane. It catalyses the reaction a triacylglycerol + H2O = a diacylglycerol + a fatty acid + H(+). Its function is as follows. Lipase which is essential for lysis of subvacuolar cytoplasm to vacuole targeted bodies and intravacuolar autophagic bodies. Involved in the lysis of intravacuolar multivesicular body (MVB) vesicles. The intravacuolar membrane disintegration by ATG15 is critical to life span extension. This is Putative lipase ATG15 (ATG15) from Cryptococcus neoformans var. neoformans serotype D (strain B-3501A) (Filobasidiella neoformans).